We begin with the raw amino-acid sequence, 427 residues long: cAMP-dependent protein kinase regulatory subunit (427 aa).

The dimerization and phosphorylation stretch occupies residues 38-184; the sequence is QFCSNFFIRK…RIKVSISNNF (147 aa). Residues 96–145 are disordered; it reads TTHMGHPNDHGALHDDDDDPLEDEDDEEFDKFSTEPLPSLPPTNYNRGRR. Over residues 110–124 the composition is skewed to acidic residues; sequence DDDDDPLEDEDDEEF. Residue Ser-147 is modified to Phosphoserine. 3',5'-cyclic AMP-binding positions include 185–300, Glu-250, Arg-259, 303–422, Glu-372, and Arg-381; these read LFRN…FLSE and LLKS…YHAV.

This sequence belongs to the cAMP-dependent kinase regulatory chain family. Tetramer, composed of 2 regulatory (R) and 2 catalytic (C) subunits. In the presence of cAMP it dissociates into 2 active monomeric C subunits and an R dimer.

This is cAMP-dependent protein kinase regulatory subunit (pkar) from Mucor circinelloides f. lusitanicus (Mucor racemosus var. lusitanicus).